The chain runs to 192 residues: Adenylate kinase (192 aa).

ATP is bound at residue 12 to 17 (GSGKTT). The NMP stretch occupies residues 34–63 (STGDLLRAEVASGSELGKTIDSFISKGNLV). AMP contacts are provided by residues Thr35, Arg40, 61 to 63 (NLV), 88 to 91 (GYPR), and Gln95. The LID stretch occupies residues 130–136 (GRNRGAD). Residue Arg131 participates in ATP binding. Residues Arg133 and Arg145 each coordinate AMP. Residue Arg173 participates in ATP binding.

The protein belongs to the adenylate kinase family. In terms of assembly, monomer.

It localises to the cytoplasm. It carries out the reaction AMP + ATP = 2 ADP. The protein operates within purine metabolism; AMP biosynthesis via salvage pathway; AMP from ADP: step 1/1. Its function is as follows. Catalyzes the reversible transfer of the terminal phosphate group between ATP and AMP. Plays an important role in cellular energy homeostasis and in adenine nucleotide metabolism. In Campylobacter jejuni subsp. jejuni serotype O:6 (strain 81116 / NCTC 11828), this protein is Adenylate kinase.